The primary structure comprises 309 residues: Cyclin-dependent kinase B1-1 (309 aa).

The Protein kinase domain maps to 4–301 (YEKLEKVGEG…AKTALDHPYF (298 aa)). Residues 10 to 18 (VGEGTYGKV) and Lys33 contribute to the ATP site. Phosphotyrosine is present on Tyr15. Catalysis depends on Asp142, which acts as the Proton acceptor. The residue at position 176 (Thr176) is a Phosphothreonine; by CAK.

Belongs to the protein kinase superfamily. CMGC Ser/Thr protein kinase family. CDC2/CDKX subfamily. In terms of assembly, interacts with CKS1. Interacts with CYCU3-1. Interacts with SIM, SMR1 and SMR2. In terms of tissue distribution, highly expressed in guard cells and stomatal precursor cells of cotyledons. Expressed in roots, stems, flowers and siliques.

It is found in the nucleus. It carries out the reaction L-seryl-[protein] + ATP = O-phospho-L-seryl-[protein] + ADP + H(+). The enzyme catalyses L-threonyl-[protein] + ATP = O-phospho-L-threonyl-[protein] + ADP + H(+). The catalysed reaction is [DNA-directed RNA polymerase] + ATP = phospho-[DNA-directed RNA polymerase] + ADP + H(+). Its activity is regulated as follows. Phosphorylation at Thr-14 or Tyr-15 inactivates the enzyme, while phosphorylation at Thr-176 activates it. In terms of biological role, may control G2/M (mitosis) phase progression. Plays a role in regulating seedling growth in darkness via regulation of hypocotyl cell elongation and cotyledon cell development. Plays a role in stomatal development. Required to suppress endoreduplication. Together with CDKB1-2, promotes both the last division in the stomatal cell lineage as well as the number of stomata. In collaboration with MYB124 and MYB88, restrict the G1/S transition and chloroplast and nuclear number during stomatal formation, and normally maintain fate and developmental progression throughout the stomatal cell lineage. This chain is Cyclin-dependent kinase B1-1 (CDKB1-1), found in Arabidopsis thaliana (Mouse-ear cress).